The primary structure comprises 382 residues: D-galactonate dehydratase (382 aa).

Asp183 serves as a coordination point for Mg(2+). The active-site Proton donor is His185. The Mg(2+) site is built by Glu209 and Glu235. Catalysis depends on His285, which acts as the Proton acceptor.

The protein belongs to the mandelate racemase/muconate lactonizing enzyme family. GalD subfamily. Requires Mg(2+) as cofactor.

It carries out the reaction D-galactonate = 2-dehydro-3-deoxy-D-galactonate + H2O. Its pathway is carbohydrate acid metabolism; D-galactonate degradation; D-glyceraldehyde 3-phosphate and pyruvate from D-galactonate: step 1/3. Catalyzes the dehydration of D-galactonate to 2-keto-3-deoxy-D-galactonate. The chain is D-galactonate dehydratase from Klebsiella pneumoniae subsp. pneumoniae (strain ATCC 700721 / MGH 78578).